The chain runs to 95 residues: Large ribosomal subunit protein uL23 (95 aa).

Belongs to the universal ribosomal protein uL23 family. Part of the 50S ribosomal subunit. Contacts protein L29, and trigger factor when it is bound to the ribosome.

Its function is as follows. One of the early assembly proteins it binds 23S rRNA. One of the proteins that surrounds the polypeptide exit tunnel on the outside of the ribosome. Forms the main docking site for trigger factor binding to the ribosome. In Bacillus licheniformis (strain ATCC 14580 / DSM 13 / JCM 2505 / CCUG 7422 / NBRC 12200 / NCIMB 9375 / NCTC 10341 / NRRL NRS-1264 / Gibson 46), this protein is Large ribosomal subunit protein uL23.